A 447-amino-acid polypeptide reads, in one-letter code: Argininosuccinate lyase (447 aa).

This sequence belongs to the lyase 1 family. Argininosuccinate lyase subfamily.

It is found in the cytoplasm. The enzyme catalyses 2-(N(omega)-L-arginino)succinate = fumarate + L-arginine. It participates in amino-acid biosynthesis; L-arginine biosynthesis; L-arginine from L-ornithine and carbamoyl phosphate: step 3/3. The sequence is that of Argininosuccinate lyase from Bacteroides fragilis (strain YCH46).